A 766-amino-acid chain; its full sequence is Exocyst complex component 6 (766 aa).

Residues 28 to 90 (NTKQIGDQLE…SLDTSLRQIS (63 aa)) adopt a coiled-coil conformation.

It belongs to the SEC15 family. As to quaternary structure, the exocyst complex is composed of Sec3/Exoc1, Sec5/Exoc2, Sec6/Exoc3, Sec8/Exoc4, Sec10/Exoc5, Sec15/Exoc6, Exo70/Exoc7 and Exo84/Exoc8. Interacts with RAB3, RAB8, RAB11 and RAB27. In terms of tissue distribution, detected in developing rhabdomeres in photoreceptor cells.

It localises to the cell projection. Its subcellular location is the rhabdomere. Its function is as follows. Component of the exocyst complex involved in the docking of exocytic vesicles with fusion sites on the plasma membrane. The polypeptide is Exocyst complex component 6 (Drosophila melanogaster (Fruit fly)).